Here is a 127-residue protein sequence, read N- to C-terminus: Aspartate 1-decarboxylase (127 aa).

Ser-25 (schiff-base intermediate with substrate; via pyruvic acid) is an active-site residue. Position 25 is a pyruvic acid (Ser) (Ser-25). Thr-57 contributes to the substrate binding site. Catalysis depends on Tyr-58, which acts as the Proton donor. Gly-73 to Ala-75 lines the substrate pocket.

This sequence belongs to the PanD family. Heterooctamer of four alpha and four beta subunits. The cofactor is pyruvate. Is synthesized initially as an inactive proenzyme, which is activated by self-cleavage at a specific serine bond to produce a beta-subunit with a hydroxyl group at its C-terminus and an alpha-subunit with a pyruvoyl group at its N-terminus.

The protein resides in the cytoplasm. The catalysed reaction is L-aspartate + H(+) = beta-alanine + CO2. It functions in the pathway cofactor biosynthesis; (R)-pantothenate biosynthesis; beta-alanine from L-aspartate: step 1/1. Functionally, catalyzes the pyruvoyl-dependent decarboxylation of aspartate to produce beta-alanine. The chain is Aspartate 1-decarboxylase from Trichormus variabilis (strain ATCC 29413 / PCC 7937) (Anabaena variabilis).